A 229-amino-acid chain; its full sequence is Leucyl/phenylalanyl-tRNA--protein transferase (229 aa).

This sequence belongs to the L/F-transferase family.

It is found in the cytoplasm. It catalyses the reaction N-terminal L-lysyl-[protein] + L-leucyl-tRNA(Leu) = N-terminal L-leucyl-L-lysyl-[protein] + tRNA(Leu) + H(+). The catalysed reaction is N-terminal L-arginyl-[protein] + L-leucyl-tRNA(Leu) = N-terminal L-leucyl-L-arginyl-[protein] + tRNA(Leu) + H(+). It carries out the reaction L-phenylalanyl-tRNA(Phe) + an N-terminal L-alpha-aminoacyl-[protein] = an N-terminal L-phenylalanyl-L-alpha-aminoacyl-[protein] + tRNA(Phe). Functionally, functions in the N-end rule pathway of protein degradation where it conjugates Leu, Phe and, less efficiently, Met from aminoacyl-tRNAs to the N-termini of proteins containing an N-terminal arginine or lysine. This is Leucyl/phenylalanyl-tRNA--protein transferase from Pseudomonas syringae pv. syringae (strain B728a).